Here is a 359-residue protein sequence, read N- to C-terminus: 1-deoxy-D-xylulose 5-phosphate reductoisomerase (359 aa).

The NADPH site is built by Thr-7, Gly-8, Ser-9, Ile-10, Ala-31, Asn-33, and Asn-111. Position 112 (Lys-112) interacts with 1-deoxy-D-xylulose 5-phosphate. Residue Glu-113 participates in NADPH binding. Asp-131 contributes to the Mn(2+) binding site. Ser-132, Glu-133, Ser-155, and His-178 together coordinate 1-deoxy-D-xylulose 5-phosphate. Residue Glu-133 coordinates Mn(2+). Position 184 (Gly-184) interacts with NADPH. 1-deoxy-D-xylulose 5-phosphate is bound by residues Ser-191, Asn-196, Lys-197, and Glu-200. Position 200 (Glu-200) interacts with Mn(2+).

The protein belongs to the DXR family. Mg(2+) is required as a cofactor. It depends on Mn(2+) as a cofactor.

It catalyses the reaction 2-C-methyl-D-erythritol 4-phosphate + NADP(+) = 1-deoxy-D-xylulose 5-phosphate + NADPH + H(+). It functions in the pathway isoprenoid biosynthesis; isopentenyl diphosphate biosynthesis via DXP pathway; isopentenyl diphosphate from 1-deoxy-D-xylulose 5-phosphate: step 1/6. Functionally, catalyzes the NADPH-dependent rearrangement and reduction of 1-deoxy-D-xylulose-5-phosphate (DXP) to 2-C-methyl-D-erythritol 4-phosphate (MEP). This is 1-deoxy-D-xylulose 5-phosphate reductoisomerase from Campylobacter hominis (strain ATCC BAA-381 / DSM 21671 / CCUG 45161 / LMG 19568 / NCTC 13146 / CH001A).